The chain runs to 491 residues: Lysine--tRNA ligase (491 aa).

Residues glutamate 400 and glutamate 407 each coordinate Mg(2+).

This sequence belongs to the class-II aminoacyl-tRNA synthetase family. In terms of assembly, homodimer. Mg(2+) is required as a cofactor.

It is found in the cytoplasm. The enzyme catalyses tRNA(Lys) + L-lysine + ATP = L-lysyl-tRNA(Lys) + AMP + diphosphate. In Mesomycoplasma hyopneumoniae (strain 7448) (Mycoplasma hyopneumoniae), this protein is Lysine--tRNA ligase.